Reading from the N-terminus, the 158-residue chain is Large ribosomal subunit protein uL13 (158 aa).

Positions 129-158 are disordered; the sequence is PEHGHHAQKPVALDFGAMNNKNGRGNNAGR. A compositionally biased stretch (low complexity) spans 144-158; it reads GAMNNKNGRGNNAGR.

It belongs to the universal ribosomal protein uL13 family. Part of the 50S ribosomal subunit.

This protein is one of the early assembly proteins of the 50S ribosomal subunit, although it is not seen to bind rRNA by itself. It is important during the early stages of 50S assembly. This is Large ribosomal subunit protein uL13 from Anaplasma phagocytophilum (strain HZ).